The sequence spans 406 residues: Succinylornithine transaminase (406 aa).

Position 252 is an N6-(pyridoxal phosphate)lysine (K252).

This sequence belongs to the class-III pyridoxal-phosphate-dependent aminotransferase family. AstC subfamily. It depends on pyridoxal 5'-phosphate as a cofactor.

It carries out the reaction N(2)-succinyl-L-ornithine + 2-oxoglutarate = N-succinyl-L-glutamate 5-semialdehyde + L-glutamate. It participates in amino-acid degradation; L-arginine degradation via AST pathway; L-glutamate and succinate from L-arginine: step 3/5. Functionally, catalyzes the transamination of N(2)-succinylornithine and alpha-ketoglutarate into N(2)-succinylglutamate semialdehyde and glutamate. Can also act as an acetylornithine aminotransferase. This chain is Succinylornithine transaminase, found in Shigella sonnei (strain Ss046).